A 374-amino-acid polypeptide reads, in one-letter code: Serpin B8 (374 aa).

Belongs to the serpin family. Ov-serpin subfamily.

Its subcellular location is the cytoplasm. In terms of biological role, has an important role in epithelial desmosome-mediated cell-cell adhesion. This chain is Serpin B8 (SERPINB8), found in Bos taurus (Bovine).